The primary structure comprises 714 residues: Fatty acid oxidation complex subunit alpha (714 aa).

The segment at 1 to 190 (MEMASAFTLN…KLGLVDDVVP (190 aa)) is enoyl-CoA hydratase. The tract at residues 306–714 (APLNSVGILG…FWKTTATDLQ (409 aa)) is 3-hydroxyacyl-CoA dehydrogenase.

In the N-terminal section; belongs to the enoyl-CoA hydratase/isomerase family. It in the central section; belongs to the 3-hydroxyacyl-CoA dehydrogenase family. In terms of assembly, heterotetramer of two alpha chains (FadJ) and two beta chains (FadI).

It localises to the cytoplasm. It carries out the reaction a (3S)-3-hydroxyacyl-CoA = a (2E)-enoyl-CoA + H2O. The enzyme catalyses a 4-saturated-(3S)-3-hydroxyacyl-CoA = a (3E)-enoyl-CoA + H2O. It catalyses the reaction a (3S)-3-hydroxyacyl-CoA + NAD(+) = a 3-oxoacyl-CoA + NADH + H(+). The catalysed reaction is (3S)-3-hydroxybutanoyl-CoA = (3R)-3-hydroxybutanoyl-CoA. It participates in lipid metabolism; fatty acid beta-oxidation. Functionally, catalyzes the formation of a hydroxyacyl-CoA by addition of water on enoyl-CoA. Also exhibits 3-hydroxyacyl-CoA epimerase and 3-hydroxyacyl-CoA dehydrogenase activities. This is Fatty acid oxidation complex subunit alpha from Escherichia coli O45:K1 (strain S88 / ExPEC).